The following is a 452-amino-acid chain: uncharacterized protein (452 aa).

This is an uncharacterized protein from Chlamydia pneumoniae (Chlamydophila pneumoniae).